We begin with the raw amino-acid sequence, 643 residues long: Phosphatidylinositol-3,5-bisphosphate 3-phosphatase MTMR2 (643 aa).

Residues Met1–Thr52 form a disordered region. A phosphoserine mark is found at Ser6 and Ser9. Polar residues predominate over residues Asp23–Lys40. Over residues Ser41–Thr52 the composition is skewed to low complexity. Phosphoserine is present on Ser58. Positions Asn68–Gly139 constitute a GRAM domain. Residues Gly205–Tyr580 form the Myotubularin phosphatase domain. Residues Asn330, Asn355, and Ile356 each contribute to the a 1,2-diacyl-sn-glycero-3-phospho-(1D-myo-inositol-3,5-bisphosphate) site. Residues Asn330, Asn355, and Ile356 each coordinate a 1,2-diacyl-sn-glycero-3-phospho-(1D-myo-inositol-3-phosphate). The active-site Phosphocysteine intermediate is Cys417. The a 1,2-diacyl-sn-glycero-3-phospho-(1D-myo-inositol-3,5-bisphosphate) site is built by Ser418, Asp419, Gly420, Trp421, Asp422, Arg423, Arg459, and Arg463. 6 residues coordinate a 1,2-diacyl-sn-glycero-3-phospho-(1D-myo-inositol-3-phosphate): Ser418, Asp419, Gly420, Trp421, Asp422, and Arg423. An a 1,2-diacyl-sn-glycero-3-phospho-(1D-myo-inositol-3-phosphate)-binding site is contributed by Arg463. Residues Ile593–Glu627 are a coiled coil. The interval Leu614–Val643 is disordered. Residues Asn620 to Ser631 show a composition bias toward low complexity. Over residues Pro632–Val643 the composition is skewed to polar residues.

This sequence belongs to the protein-tyrosine phosphatase family. Non-receptor class myotubularin subfamily. Homodimer (via coiled-coil domain). Heterotetramer consisting of one MTMR2 dimer and one SBF2/MTMR13 dimer; specifically in peripheral nerves stabilizes SBF2/MTMR13 at the membranes and increases MTMR2 catalytic activity towards phosphatidylinositol 3,5-bisphosphate and to a lesser extent towards phosphatidylinositol 3-phosphate. Heterodimer with SBF1/MTMR5; acts as an adapter for the phosphatase MTMR2 to regulate MTMR2 catalytic activity and subcellular location. Heterodimer with MTMR12. In terms of processing, phosphorylation at Ser-58 decreases MTMR2 localization to endocytic vesicular structures. Expressed in sciatic nerve and in Schwann cells (at protein level). Detected in adult dorsal root ganglia, neurons of the central nervous system, motor neurons, cell soma and neurites of sensory neurons, olfactory bulb, cerebellum and hippocampus.

Its subcellular location is the cytoplasm. The protein localises to the early endosome membrane. The protein resides in the perinuclear region. It is found in the cell projection. It localises to the axon. Its subcellular location is the endosome membrane. It carries out the reaction a 1,2-diacyl-sn-glycero-3-phospho-(1D-myo-inositol-3,5-bisphosphate) + H2O = a 1,2-diacyl-sn-glycero-3-phospho-(1D-myo-inositol-5-phosphate) + phosphate. The catalysed reaction is a 1,2-diacyl-sn-glycero-3-phospho-(1D-myo-inositol-3-phosphate) + H2O = a 1,2-diacyl-sn-glycero-3-phospho-(1D-myo-inositol) + phosphate. The enzyme catalyses 1,2-dioctanoyl-sn-glycero-3-phospho-(1-D-myo-inositol-3-phosphate) + H2O = 1,2-dioctanoyl-sn-glycero-3-phospho-(1D-myo-inositol) + phosphate. It catalyses the reaction 1,2-dioctanoyl-sn-glycero-3-phospho-(1D-myo-inositol-3,5-bisphosphate) + H2O = 1,2-dioctanoyl-sn-glycero-3-phospho-(1D-myo-inositol-5-phosphate) + phosphate. Its function is as follows. Lipid phosphatase that specifically dephosphorylates the D-3 position of phosphatidylinositol 3-phosphate and phosphatidylinositol 3,5-bisphosphate, generating phosphatidylinositol and phosphatidylinositol 5-phosphate. Regulates the level of these phosphoinositides critical for various biological processes including autophagy initiation and autophagosome maturation. The polypeptide is Phosphatidylinositol-3,5-bisphosphate 3-phosphatase MTMR2 (Mus musculus (Mouse)).